Consider the following 237-residue polypeptide: MTKLSVNINKVATLRNARGGDTPNVVKVALDCEAFGADGITVHPRPDERHIRRADVYDLRPLLRTEFNIEGYPSPEFIDLVLKVKPHQVTLVPDDPSQITSNSGWDTKANLEFLSEVLDQFNSAGIRTSVFVAADPEMVEYAAKAGADRVELYTEPYATAYPKNPEAAVAPFVEAAKTARKLGIGLNAGHDLSLVNLNYFYKNIPWVDEVSIGHALISDALYLGLERTIQEYKNCLR.

3-amino-2-oxopropyl phosphate-binding residues include N7 and R18. H43 (proton acceptor) is an active-site residue. 1-deoxy-D-xylulose 5-phosphate is bound by residues R45 and H50. E70 acts as the Proton acceptor in catalysis. T100 lines the 1-deoxy-D-xylulose 5-phosphate pocket. Catalysis depends on H190, which acts as the Proton donor. 3-amino-2-oxopropyl phosphate-binding positions include D191 and 213-214; that span reads GH.

It belongs to the PNP synthase family. In terms of assembly, homooctamer; tetramer of dimers.

It localises to the cytoplasm. It catalyses the reaction 3-amino-2-oxopropyl phosphate + 1-deoxy-D-xylulose 5-phosphate = pyridoxine 5'-phosphate + phosphate + 2 H2O + H(+). Its pathway is cofactor biosynthesis; pyridoxine 5'-phosphate biosynthesis; pyridoxine 5'-phosphate from D-erythrose 4-phosphate: step 5/5. Functionally, catalyzes the complicated ring closure reaction between the two acyclic compounds 1-deoxy-D-xylulose-5-phosphate (DXP) and 3-amino-2-oxopropyl phosphate (1-amino-acetone-3-phosphate or AAP) to form pyridoxine 5'-phosphate (PNP) and inorganic phosphate. The chain is Pyridoxine 5'-phosphate synthase from Bacteroides thetaiotaomicron (strain ATCC 29148 / DSM 2079 / JCM 5827 / CCUG 10774 / NCTC 10582 / VPI-5482 / E50).